Reading from the N-terminus, the 547-residue chain is Sesterfisheric acid synthase (547 aa).

A helical transmembrane segment spans residues 19 to 39; it reads IMGCSLGTGLLVSMIIYNYFF. N-linked (GlcNAc...) asparagine glycosylation is found at Asn341 and Asn404. Cys490 serves as a coordination point for heme.

It belongs to the cytochrome P450 family. Heme is required as a cofactor.

The protein resides in the membrane. It carries out the reaction sesterfisherol + 3 reduced [NADPH--hemoprotein reductase] + 3 O2 = sesterfisherate + 3 oxidized [NADPH--hemoprotein reductase] + 4 H2O + 4 H(+). It participates in secondary metabolite biosynthesis; terpenoid biosynthesis. In terms of biological role, cytochrome P450 monooxygenase; part of the gene cluster that mediates the biosynthesis of sesterfisheric acid. The bifunctional terpene synthase NfSS converts DMAPP and IPP, and also GGPP, into sesterfisherol. The C-terminal prenyltransferase (PT) domain of NfSS catalyzes formation of GFPP, whereas the N-terminal terpene cyclase (TC) domain catalyzes the cyclization of GFPP to sesterfisherol. The cytochrome P450 monooxygenase NfP450 then catalyzes oxidative modifications of sesterfisherol into sesterfisheric acid. In Neosartorya fischeri (strain ATCC 1020 / DSM 3700 / CBS 544.65 / FGSC A1164 / JCM 1740 / NRRL 181 / WB 181) (Aspergillus fischerianus), this protein is Sesterfisheric acid synthase.